The primary structure comprises 400 residues: ATP-dependent rRNA helicase RRP3 (400 aa).

The short motif at 1-29 is the Q motif element; it reads MEFGDLRIDESLIKTCQEKGITRPTEVQR. Positions 32–202 constitute a Helicase ATP-binding domain; sequence IPAVLGGGDV…SSILKRPKTI (171 aa). Residue 45-52 participates in ATP binding; it reads SQTGSGKT. Positions 150-153 match the DEAD box motif; that stretch reads DEAD. Residues 229 to 373 enclose the Helicase C-terminal domain; the sequence is ALVELLEMSQ…EFKMMKKNFG (145 aa).

It belongs to the DEAD box helicase family. DDX47/RRP3 subfamily. As to quaternary structure, interacts with the SSU processome.

The protein localises to the nucleus. The enzyme catalyses ATP + H2O = ADP + phosphate + H(+). ATP-dependent rRNA helicase required for pre-ribosomal RNA processing. Involved in the maturation of the 35S-pre-rRNA and to its cleavage to mature 18S rRNA. In Encephalitozoon cuniculi (strain GB-M1) (Microsporidian parasite), this protein is ATP-dependent rRNA helicase RRP3.